We begin with the raw amino-acid sequence, 1004 residues long: Polyhomeotic-like protein 1 (1004 aa).

The segment covering 1 to 22 (METESEQNSNSTNGSSSSGGSS) has biased composition (low complexity). 6 disordered regions span residues 1–24 (METE…SSRP), 212–241 (NQQA…SSLS), 261–355 (SLNL…NLTR), 432–512 (QQQQ…QLGA), 556–589 (RGMP…PPTL), and 636–672 (TLAV…SPKV). Residues 212-228 (NQQASAQGPQMQGSTQK) are compositionally biased toward polar residues. A compositionally biased stretch (gly residues) spans 279-303 (MGPGGGGQAHGGLGQLPSSGMGGGS). Polar residues-rich tracts occupy residues 319-329 (QTVTVSQGSQT) and 344-355 (SGQQNVGMNLTR). Residues 432–447 (QQQQQQQQPQATTLTA) are compositionally biased toward low complexity. The segment covering 448–458 (PQPPQVPPTQQ) has biased composition (pro residues). A compositionally biased stretch (low complexity) spans 459–482 (VPPSQSQQQAQTLVVQPMLQSSPL). A compositionally biased stretch (pro residues) spans 483 to 495 (SLPPDAAPKPPIP). Residues 566 to 583 (QAHLASSPPSSQAPGALQ) are compositionally biased toward low complexity. The residue at position 645 (S645) is a Phosphoserine. K763 is covalently cross-linked (Glycyl lysine isopeptide (Lys-Gly) (interchain with G-Cter in SUMO2)). An FCS-type zinc finger spans residues 791–825 (LDKKANLLKCEYCGKYAPAEQFRGSKRFCSMTCAK). 4 residues coordinate Zn(2+): C800, C803, C819, and C823. Positions 848-928 (ANYARVRRRG…APPTPELHGI (81 aa)) are disordered. S898 is subject to Phosphoserine. T922 bears the Phosphothreonine mark. The SAM domain maps to 940–1004 (WSVEEVYEFI…CAKINVLKET (65 aa)).

Homodimer. Component of a PRC1-like complex. Interacts with RNF2 and CBX7. Interacts with PHC2, PHC2 and BMI1.

The protein localises to the nucleus. Functionally, component of a Polycomb group (PcG) multiprotein PRC1-like complex, a complex class required to maintain the transcriptionally repressive state of many genes, including Hox genes, throughout development. PcG PRC1 complex acts via chromatin remodeling and modification of histones; it mediates monoubiquitination of histone H2A 'Lys-119', rendering chromatin heritably changed in its expressibility. Required for proper control of cellular levels of GMNN expression. The polypeptide is Polyhomeotic-like protein 1 (PHC1) (Homo sapiens (Human)).